The sequence spans 438 residues: Coenzyme A disulfide reductase (438 aa).

8–33 (GAVAGGATCASQIRRLDKESDIIIFE) is an FAD binding site. Residues Thr-15, Gln-19, Arg-22, Ser-39, and Asn-42 each contribute to the substrate site. Cys-43 serves as the catalytic Nucleophile. Cys-43 acts as the Redox-active in catalysis. Residue Lys-71 participates in substrate binding. Residue 151–166 (VLVVGAGYVSLEVLEN) coordinates NADP(+). 267 to 277 (TNVPNIYVIGD) contributes to the FAD binding site. Substrate is bound at residue His-299. An FAD-binding site is contributed by Tyr-419. Position 427 (Lys-427) interacts with substrate.

This sequence belongs to the class-III pyridine nucleotide-disulfide oxidoreductase family. In terms of assembly, homodimer. Requires FAD as cofactor.

It catalyses the reaction NADP(+) + 2 CoA = CoA-disulfide + NADPH + H(+). In terms of biological role, catalyzes specifically the NADPH-dependent reduction of coenzyme A disulfide. This is Coenzyme A disulfide reductase from Staphylococcus aureus (strain MRSA252).